The primary structure comprises 124 residues: Protein CYSTEINE-RICH TRANSMEMBRANE MODULE 10 (124 aa).

Residues 1–103 (MSYQDPQHPV…PKNKKDKKDS (103 aa)) form a disordered region. Pro residues-rich tracts occupy residues 27–40 (AGYP…PPQY) and 65–88 (GYPP…PPPH). Residues 101 to 118 (KDSGGFMEGCLAMLCCCV) traverse the membrane as a helical segment.

It belongs to the CYSTM1 family. Heterodimers. Interacts with CYSTM7 and WIH1/CYSTM13. Mostly expressed in stems and,at low levels, in stems, roots, flowers, siliques and leaves.

The protein localises to the cell membrane. Its subcellular location is the cytoplasm. In terms of biological role, involved in resistance to abiotic stress. The sequence is that of Protein CYSTEINE-RICH TRANSMEMBRANE MODULE 10 from Arabidopsis thaliana (Mouse-ear cress).